The sequence spans 166 residues: Putative membrane protein 162 (166 aa).

Position 1 (methionine 1) is a topological domain, intravirion. A helical membrane pass occupies residues 2–22; the sequence is YYPAVQVLIGIILVDNFNTEF. Residues 23-166 lie on the Virion surface side of the membrane; the sequence is LSSEKKNCKT…TIMGIARNIL (144 aa).

The protein belongs to the asfivirus envelope protein p22 family.

Its subcellular location is the virion membrane. The protein localises to the host cell membrane. The polypeptide is Putative membrane protein 162 (African swine fever virus (isolate Tick/Malawi/Lil 20-1/1983) (ASFV)).